The primary structure comprises 340 residues: S-adenosylmethionine:tRNA ribosyltransferase-isomerase (340 aa).

The protein belongs to the QueA family. In terms of assembly, monomer.

The protein localises to the cytoplasm. The enzyme catalyses 7-aminomethyl-7-carbaguanosine(34) in tRNA + S-adenosyl-L-methionine = epoxyqueuosine(34) in tRNA + adenine + L-methionine + 2 H(+). It participates in tRNA modification; tRNA-queuosine biosynthesis. Functionally, transfers and isomerizes the ribose moiety from AdoMet to the 7-aminomethyl group of 7-deazaguanine (preQ1-tRNA) to give epoxyqueuosine (oQ-tRNA). This chain is S-adenosylmethionine:tRNA ribosyltransferase-isomerase, found in Francisella tularensis subsp. holarctica (strain OSU18).